The chain runs to 190 residues: Elongation factor P-like protein (190 aa).

This sequence belongs to the elongation factor P family.

This Salmonella gallinarum (strain 287/91 / NCTC 13346) protein is Elongation factor P-like protein.